Reading from the N-terminus, the 525-residue chain is EGF domain-specific O-linked N-acetylglucosamine transferase (525 aa).

The first 24 residues, 1-24, serve as a signal peptide directing secretion; sequence MVPLRLVLLLHIIHFSCENEVGSA. Positions 293–295 match the Required for optimal activity motif; the sequence is DYE. N-linked (GlcNAc...) asparagine glycosylation occurs at asparagine 352. Positions 522–525 match the Prevents secretion from ER motif; that stretch reads RDEL.

This sequence belongs to the glycosyltransferase 61 family.

The protein localises to the endoplasmic reticulum lumen. The enzyme catalyses L-seryl-[protein] + UDP-N-acetyl-alpha-D-glucosamine = 3-O-(N-acetyl-beta-D-glucosaminyl)-L-seryl-[protein] + UDP + H(+). It carries out the reaction L-threonyl-[protein] + UDP-N-acetyl-alpha-D-glucosamine = 3-O-(N-acetyl-beta-D-glucosaminyl)-L-threonyl-[protein] + UDP + H(+). Functionally, catalyzes the transfer of a single N-acetylglucosamine from UDP-GlcNAc to a serine or threonine residue in extracellular proteins resulting in their modification with a beta-linked N-acetylglucosamine (O-GlcNAc). Specifically glycosylates the Thr residue located between the fifth and sixth conserved cysteines of folded EGF-like domains. The protein is EGF domain-specific O-linked N-acetylglucosamine transferase (eogt) of Xenopus laevis (African clawed frog).